A 282-amino-acid chain; its full sequence is Shikimate dehydrogenase (NADP(+)) (282 aa).

Residues 16–18 (SLS) and threonine 63 each bind shikimate. Lysine 67 serves as the catalytic Proton acceptor. Shikimate-binding residues include asparagine 88 and aspartate 103. NADP(+) contacts are provided by residues 128–132 (GAGGA) and glycine 243.

The protein belongs to the shikimate dehydrogenase family. As to quaternary structure, homodimer.

It catalyses the reaction shikimate + NADP(+) = 3-dehydroshikimate + NADPH + H(+). The protein operates within metabolic intermediate biosynthesis; chorismate biosynthesis; chorismate from D-erythrose 4-phosphate and phosphoenolpyruvate: step 4/7. In terms of biological role, involved in the biosynthesis of the chorismate, which leads to the biosynthesis of aromatic amino acids. Catalyzes the reversible NADPH linked reduction of 3-dehydroshikimate (DHSA) to yield shikimate (SA). The polypeptide is Shikimate dehydrogenase (NADP(+)) (Xylella fastidiosa (strain 9a5c)).